The sequence spans 362 residues: 3-dehydroquinate synthase (362 aa).

Belongs to the archaeal-type DHQ synthase family.

It carries out the reaction 2-amino-2,3,7-trideoxy-D-lyxo-hept-6-ulosonate + NAD(+) + H2O = 3-dehydroquinate + NH4(+) + NADH + H(+). Its function is as follows. Catalyzes the oxidative deamination and cyclization of 2-amino-3,7-dideoxy-D-threo-hept-6-ulosonic acid (ADH) to yield 3-dehydroquinate (DHQ), which is fed into the canonical shikimic pathway of aromatic amino acid biosynthesis. The polypeptide is 3-dehydroquinate synthase (Methanococcus aeolicus (strain ATCC BAA-1280 / DSM 17508 / OCM 812 / Nankai-3)).